The primary structure comprises 260 residues: PsbP domain-containing protein 4, chloroplastic (260 aa).

This sequence belongs to the PsbP family.

The protein localises to the plastid. It localises to the chloroplast thylakoid lumen. This chain is PsbP domain-containing protein 4, chloroplastic (PPD4), found in Arabidopsis thaliana (Mouse-ear cress).